Consider the following 514-residue polypeptide: NAD(P)H-quinone oxidoreductase subunit 2 (514 aa).

Transmembrane regions (helical) follow at residues 16–36 (IWPE…DLIV), 43–63 (WLPY…YFEW), 80–100 (LSIV…LMSV), 110–130 (LAEF…LSGA), 133–153 (LVMI…MTGY), 168–188 (LLIG…LYGL), 211–231 (LGLA…ISAV), 245–265 (PTPV…ALAI), 279–299 (WHFI…VVAL), 307–327 (MLAY…TANS), 335–355 (IFYL…IILF), 379–399 (LGLS…GFFG), 411–431 (GLYG…YYYI), and 467–487 (VGLV…NPLF).

It belongs to the complex I subunit 2 family. NDH-1 can be composed of about 15 different subunits; different subcomplexes with different compositions have been identified which probably have different functions.

It localises to the cellular thylakoid membrane. The catalysed reaction is a plastoquinone + NADH + (n+1) H(+)(in) = a plastoquinol + NAD(+) + n H(+)(out). It carries out the reaction a plastoquinone + NADPH + (n+1) H(+)(in) = a plastoquinol + NADP(+) + n H(+)(out). In terms of biological role, NDH-1 shuttles electrons from an unknown electron donor, via FMN and iron-sulfur (Fe-S) centers, to quinones in the respiratory and/or the photosynthetic chain. The immediate electron acceptor for the enzyme in this species is believed to be plastoquinone. Couples the redox reaction to proton translocation, and thus conserves the redox energy in a proton gradient. Cyanobacterial NDH-1 also plays a role in inorganic carbon-concentration. The protein is NAD(P)H-quinone oxidoreductase subunit 2 of Gloeothece citriformis (strain PCC 7424) (Cyanothece sp. (strain PCC 7424)).